The primary structure comprises 298 residues: Ribosomal RNA small subunit methyltransferase H (298 aa).

Residues 46 to 48, Asp65, Phe92, Asp108, and His115 each bind S-adenosyl-L-methionine; that span reads GGH.

This sequence belongs to the methyltransferase superfamily. RsmH family.

It is found in the cytoplasm. The enzyme catalyses cytidine(1402) in 16S rRNA + S-adenosyl-L-methionine = N(4)-methylcytidine(1402) in 16S rRNA + S-adenosyl-L-homocysteine + H(+). Functionally, specifically methylates the N4 position of cytidine in position 1402 (C1402) of 16S rRNA. In Nostoc punctiforme (strain ATCC 29133 / PCC 73102), this protein is Ribosomal RNA small subunit methyltransferase H.